We begin with the raw amino-acid sequence, 139 residues long: Large-conductance mechanosensitive channel (139 aa).

2 helical membrane passes run 9–29 (AFAV…GAAF) and 79–99 (IQTV…VKAI).

It belongs to the MscL family. As to quaternary structure, homopentamer.

Its subcellular location is the cell inner membrane. Its function is as follows. Channel that opens in response to stretch forces in the membrane lipid bilayer. May participate in the regulation of osmotic pressure changes within the cell. This chain is Large-conductance mechanosensitive channel, found in Pseudomonas putida (strain ATCC 700007 / DSM 6899 / JCM 31910 / BCRC 17059 / LMG 24140 / F1).